A 154-amino-acid chain; its full sequence is Ribosome maturation factor RimP (154 aa).

This sequence belongs to the RimP family.

It is found in the cytoplasm. Functionally, required for maturation of 30S ribosomal subunits. This Yersinia pseudotuberculosis serotype O:1b (strain IP 31758) protein is Ribosome maturation factor RimP.